A 489-amino-acid chain; its full sequence is 3-octaprenyl-4-hydroxybenzoate carboxy-lyase (489 aa).

Asparagine 172 serves as a coordination point for Mn(2+). Residues 175–177 (IYR), 189–191 (RWL), and 194–195 (RG) contribute to the prenylated FMN site. Residue glutamate 238 coordinates Mn(2+). Aspartate 287 functions as the Proton donor in the catalytic mechanism.

It belongs to the UbiD family. Homohexamer. It depends on prenylated FMN as a cofactor. Mn(2+) is required as a cofactor.

It localises to the cell membrane. It carries out the reaction a 4-hydroxy-3-(all-trans-polyprenyl)benzoate + H(+) = a 2-(all-trans-polyprenyl)phenol + CO2. Its pathway is cofactor biosynthesis; ubiquinone biosynthesis. Its function is as follows. Catalyzes the decarboxylation of 3-octaprenyl-4-hydroxy benzoate to 2-octaprenylphenol, an intermediate step in ubiquinone biosynthesis. This Glaesserella parasuis serovar 5 (strain SH0165) (Haemophilus parasuis) protein is 3-octaprenyl-4-hydroxybenzoate carboxy-lyase.